The following is a 331-amino-acid chain: tRNA-dihydrouridine(20/20a) synthase (331 aa).

FMN contacts are provided by residues 18–20 (PML) and Gln70. Cys100 acts as the Proton donor in catalysis. FMN-binding positions include Lys139, His172, 212 to 214 (NGG), and 234 to 235 (GR).

The protein belongs to the Dus family. DusA subfamily. Requires FMN as cofactor.

The enzyme catalyses 5,6-dihydrouridine(20) in tRNA + NADP(+) = uridine(20) in tRNA + NADPH + H(+). The catalysed reaction is 5,6-dihydrouridine(20) in tRNA + NAD(+) = uridine(20) in tRNA + NADH + H(+). It carries out the reaction 5,6-dihydrouridine(20a) in tRNA + NADP(+) = uridine(20a) in tRNA + NADPH + H(+). It catalyses the reaction 5,6-dihydrouridine(20a) in tRNA + NAD(+) = uridine(20a) in tRNA + NADH + H(+). Catalyzes the synthesis of 5,6-dihydrouridine (D), a modified base found in the D-loop of most tRNAs, via the reduction of the C5-C6 double bond in target uridines. Specifically modifies U20 and U20a in tRNAs. This Escherichia coli O6:H1 (strain CFT073 / ATCC 700928 / UPEC) protein is tRNA-dihydrouridine(20/20a) synthase.